The chain runs to 94 residues: Phosphoribosyl-ATP pyrophosphatase (94 aa).

Belongs to the PRA-PH family.

It is found in the cytoplasm. It carries out the reaction 1-(5-phospho-beta-D-ribosyl)-ATP + H2O = 1-(5-phospho-beta-D-ribosyl)-5'-AMP + diphosphate + H(+). The protein operates within amino-acid biosynthesis; L-histidine biosynthesis; L-histidine from 5-phospho-alpha-D-ribose 1-diphosphate: step 2/9. This Pyrobaculum calidifontis (strain DSM 21063 / JCM 11548 / VA1) protein is Phosphoribosyl-ATP pyrophosphatase.